Consider the following 327-residue polypeptide: COP9 signalosome complex subunit 7 (327 aa).

The PCI domain occupies 4-165 (VHHRALDALQ…NPPTVNVTSV (162 aa)). 2 disordered regions span residues 233–260 (GGEQLQGGNPGQGQGQGQGGLGKNAGWK) and 276–327 (GGSN…GKKS). The span at 236–255 (QLQGGNPGQGQGQGQGGLGK) shows a compositional bias: gly residues. Positions 315-327 (GARHSKRFLGKKS) are enriched in basic residues.

The protein belongs to the CSN7/EIF3M family. CSN7 subfamily. Component of the COP9 signalosome (CSN) complex. Present in uninduced vegetative hyphae, induced conidiating cultures and in both conidiospores and ascospores.

The protein localises to the cytoplasm. Its subcellular location is the nucleus. In terms of biological role, component of the COP9 signalosome (CSN) complex that acts as an regulator of the ubiquitin (Ubl) conjugation pathway by mediating the deneddylation of the cullin subunit of SCF-type E3 ubiquitin-protein ligase complexes. The CSN complex seems to link protein degradation to sexual development. May be required for sporulation only at elevated temperatures. This is COP9 signalosome complex subunit 7 (csnG) from Emericella nidulans (strain FGSC A4 / ATCC 38163 / CBS 112.46 / NRRL 194 / M139) (Aspergillus nidulans).